The sequence spans 253 residues: 5'-nucleotidase SurE 2 (253 aa).

A divalent metal cation contacts are provided by aspartate 8, aspartate 9, serine 39, and asparagine 92.

It belongs to the SurE nucleotidase family. It depends on a divalent metal cation as a cofactor.

It localises to the cytoplasm. It carries out the reaction a ribonucleoside 5'-phosphate + H2O = a ribonucleoside + phosphate. Its function is as follows. Nucleotidase that shows phosphatase activity on nucleoside 5'-monophosphates. This chain is 5'-nucleotidase SurE 2, found in Burkholderia lata (strain ATCC 17760 / DSM 23089 / LMG 22485 / NCIMB 9086 / R18194 / 383).